We begin with the raw amino-acid sequence, 360 residues long: MKASLLNKLDLLHDRYEELTALLGDAEVIAEQGRFRAYSKEYAEVEPVVAAYREFRKVRDDLAGAQALLKDSDPDLREMAAEEVAEARERLAGLEDRLQRMLLPRDPNDARNVFLEIRAGTGGDEAAIFAGDLFRMYSRYAEKQGWRIEILSENPGEHGGYKEIITRVEGDNVYGKLKFESGAHRVQRVPETESQGRIHTSACTVAVLPEPDEQAAIEINPAELRVDTYRSSGAGGQHVNKTDSAIRITHLPTGIVVECQEERSQHKNRAKAMAWLAAKLQDRQDAAAHREISETRRLLVGSGDRSERIRTYNFPQGRVTEHRINLTLYALDEVMAGGVEAVIEPLLSEYQADQLAALGD.

Q237 bears the N5-methylglutamine mark.

The protein belongs to the prokaryotic/mitochondrial release factor family. Post-translationally, methylated by PrmC. Methylation increases the termination efficiency of RF1.

Its subcellular location is the cytoplasm. Functionally, peptide chain release factor 1 directs the termination of translation in response to the peptide chain termination codons UAG and UAA. The chain is Peptide chain release factor 1 from Azotobacter vinelandii (strain DJ / ATCC BAA-1303).